The chain runs to 176 residues: Protein OPG163 (176 aa).

The first 14 residues, 1-14 (MDAAFVITPMGVLT), serve as a signal peptide directing secretion.

The protein belongs to the orthopoxvirus OPG163 family.

The protein localises to the host endosome. Mildly affects the expression of MHC class II molecules on the surface of host antigen presenting cells (APCs). The protein is Protein OPG163 (OPG163) of Vaccinia virus (strain Western Reserve) (VACV).